The following is a 550-amino-acid chain: MSNTVVTGEVLDKSIREVVRILEDAVGCTAGPKGLTVAISKPYGSPEITKDGYKVMKSIKPEEPLAAAIASIITQSASQCNDKVGDGTTTCSILTAKVIEEVSKAKAAGSDIVSIKNGILKAKEAVLTALMSMRREVEEDEIAQVATLSANGDKNIGSKIAQCVKEVGKDGVITVEESKGFKDLEVEKTDGMQFDRGYLSPYFVTNAEKMLVEFENPYIFLTEKKINLVQSILPILENVARSGRPLLIIAEDVEGEALSTLVLNKLRGGLQVAAVKAPGFGDRRKDMLGDIAVIVGAKYVVNDELAVKMEDIALSDLGTAKSVRITKDATTIIGSVDSSSESIASRTNQIKAQIENSSSDYDKEKLRERLAKLSGGVAVLKVGGSSEVEVKERKDRVEDALHATRAAVEEGVVPGGGAALLYALSSLDGLKGKNDDEQWGIDIIRRAACAPIKRIIKNSGSEEAPCVIQHLLKQNDKELIYNVDTMNYANAFTSGVMDPLKVVRIAFDLAVSLAAVFMTLNAVVVDVPSKNDAAGAGAGGMGGMGGMGGF.

Residues 29–32 (TAGP), Lys-50, 86–90 (DGTTT), Gly-416, and Asp-498 contribute to the ATP site.

It belongs to the chaperonin (HSP60) family. Forms a cylinder of 14 subunits composed of two heptameric rings stacked back-to-back. Interacts with the co-chaperonin GroES.

The protein resides in the cytoplasm. It carries out the reaction ATP + H2O + a folded polypeptide = ADP + phosphate + an unfolded polypeptide.. Together with its co-chaperonin GroES, plays an essential role in assisting protein folding. The GroEL-GroES system forms a nano-cage that allows encapsulation of the non-native substrate proteins and provides a physical environment optimized to promote and accelerate protein folding. The protein is Chaperonin GroEL of Anaplasma phagocytophilum (strain HZ).